Consider the following 186-residue polypeptide: EF-hand protein 5 (186 aa).

The disordered stretch occupies residues 1–23 (MSRSKEVSPNLSQQKRGDVRSAG). EF-hand domains are found at residues 41–76 (SAEL…GLHT), 77–112 (SEEE…GIDE), 113–148 (ASIA…SGEH), and 149–186 (SSAE…LNKM). 3 residues coordinate Ca(2+): glutamate 98, aspartate 126, and threonine 130.

In Leishmania tarentolae (Sauroleishmania tarentolae), this protein is EF-hand protein 5.